The primary structure comprises 31 residues: Cytochrome b6-f complex subunit 6 (31 aa).

The chain crosses the membrane as a helical span at residues 4 to 26 (ITSYFGFLLAALTVTSALFIGLS).

This sequence belongs to the PetL family. The 4 large subunits of the cytochrome b6-f complex are cytochrome b6, subunit IV (17 kDa polypeptide, PetD), cytochrome f and the Rieske protein, while the 4 small subunits are PetG, PetL, PetM and PetN. The complex functions as a dimer.

The protein resides in the plastid. Its subcellular location is the chloroplast thylakoid membrane. In terms of biological role, component of the cytochrome b6-f complex, which mediates electron transfer between photosystem II (PSII) and photosystem I (PSI), cyclic electron flow around PSI, and state transitions. PetL is important for photoautotrophic growth as well as for electron transfer efficiency and stability of the cytochrome b6-f complex. The polypeptide is Cytochrome b6-f complex subunit 6 (Daucus carota (Wild carrot)).